The sequence spans 227 residues: ATP-dependent dethiobiotin synthetase BioD (227 aa).

12-17 (DVGKTV) contacts ATP. Thr16 provides a ligand contact to Mg(2+). Lys37 is an active-site residue. Position 41 (Thr41) interacts with substrate. ATP-binding positions include Asp50, 110–113 (EGAG), 171–172 (GS), and 201–203 (PAG). The Mg(2+) site is built by Asp50 and Glu110.

This sequence belongs to the dethiobiotin synthetase family. In terms of assembly, homodimer. Requires Mg(2+) as cofactor.

The protein resides in the cytoplasm. It carries out the reaction (7R,8S)-7,8-diammoniononanoate + CO2 + ATP = (4R,5S)-dethiobiotin + ADP + phosphate + 3 H(+). Its pathway is cofactor biosynthesis; biotin biosynthesis; biotin from 7,8-diaminononanoate: step 1/2. Its function is as follows. Catalyzes a mechanistically unusual reaction, the ATP-dependent insertion of CO2 between the N7 and N8 nitrogen atoms of 7,8-diaminopelargonic acid (DAPA, also called 7,8-diammoniononanoate) to form a ureido ring. The protein is ATP-dependent dethiobiotin synthetase BioD of Rhodococcus erythropolis (strain PR4 / NBRC 100887).